A 104-amino-acid chain; its full sequence is Type IV secretion system protein PtlB homolog (104 aa).

A helical membrane pass occupies residues 30 to 50; the sequence is IALLGIWFSIAFLALFPVALL.

The protein belongs to the virB3 family.

The protein resides in the cell membrane. In Bordetella parapertussis (strain 12822 / ATCC BAA-587 / NCTC 13253), this protein is Type IV secretion system protein PtlB homolog (ptlB).